A 394-amino-acid polypeptide reads, in one-letter code: Elongation factor Tu (394 aa).

The tr-type G domain maps to 10–204 (KPHVNIGTIG…AVDSYIPQPI (195 aa)). Positions 19–26 (GHVDHGKT) are G1. 19–26 (GHVDHGKT) provides a ligand contact to GTP. T26 contributes to the Mg(2+) binding site. The segment at 60–64 (GITIS) is G2. The G3 stretch occupies residues 81 to 84 (DCPG). GTP-binding positions include 81-85 (DCPGH) and 136-139 (NKVD). Residues 136-139 (NKVD) form a G4 region. The segment at 174 to 176 (SAL) is G5.

It belongs to the TRAFAC class translation factor GTPase superfamily. Classic translation factor GTPase family. EF-Tu/EF-1A subfamily. As to quaternary structure, monomer.

It is found in the cytoplasm. The enzyme catalyses GTP + H2O = GDP + phosphate + H(+). In terms of biological role, GTP hydrolase that promotes the GTP-dependent binding of aminoacyl-tRNA to the A-site of ribosomes during protein biosynthesis. This is Elongation factor Tu from Rickettsia typhi (strain ATCC VR-144 / Wilmington).